A 442-amino-acid polypeptide reads, in one-letter code: MNRTVFLAFVFGWYFCSIALSIYNRWMFDPKDGLGIGYPVLVTTFHQATLWLLSGIYIKLRHKPVKNVLRKNNGFNWSFFLKFLLPTAVASAGDIGLSNVSFQYVPLTIYTIIKSSSIAFVLLFGCIFKLEKFHWKLALSVIIMFVGVALMVFKPSDSTSTKNDQALVIFGSFLVLASSCLSGLRWVYTQLMLRNNPIQTNTAAAVEESDGALFTENEDNVDNEPVVNLANNKMLENFGESKPHPIHTIHQLAPIMGITLLLTSLLVEKPFPGIFSSSIFRLDTSNGGVGTETTVLSIVRGIVLLILPGFAVFLLTICEFSILEQTPVLTVSIVGIVKELLTVIFGIIILSERLSGFYNWLGMLIIMADVCYYNYFRYKQDLLQKYHSVSTQDNRNELKGFQDFEQLGSKKIAPYSISVDLTNQEYELDMIAQNVSRSSQQV.

Topologically, residues 1 to 3 are cytoplasmic; sequence MNR. A helical membrane pass occupies residues 4–24; it reads TVFLAFVFGWYFCSIALSIYN. The Extracellular portion of the chain corresponds to 25 to 32; the sequence is RWMFDPKD. A helical transmembrane segment spans residues 33–53; the sequence is GLGIGYPVLVTTFHQATLWLL. Over 54–76 the chain is Cytoplasmic; the sequence is SGIYIKLRHKPVKNVLRKNNGFN. A helical membrane pass occupies residues 77–97; the sequence is WSFFLKFLLPTAVASAGDIGL. Residues 98-107 lie on the Extracellular side of the membrane; that stretch reads SNVSFQYVPL. Asn99 carries N-linked (GlcNAc...) asparagine glycosylation. The helical transmembrane segment at 108 to 128 threads the bilayer; that stretch reads TIYTIIKSSSIAFVLLFGCIF. The Cytoplasmic portion of the chain corresponds to 129-132; the sequence is KLEK. A helical membrane pass occupies residues 133 to 153; sequence FHWKLALSVIIMFVGVALMVF. Residues 154–166 are Extracellular-facing; it reads KPSDSTSTKNDQA. The chain crosses the membrane as a helical span at residues 167–187; that stretch reads LVIFGSFLVLASSCLSGLRWV. The Cytoplasmic portion of the chain corresponds to 188 to 254; that stretch reads YTQLMLRNNP…PIHTIHQLAP (67 aa). Ser209 carries the phosphoserine modification. Residues 255–275 traverse the membrane as a helical segment; the sequence is IMGITLLLTSLLVEKPFPGIF. The Extracellular segment spans residues 276 to 301; it reads SSSIFRLDTSNGGVGTETTVLSIVRG. The helical transmembrane segment at 302–322 threads the bilayer; that stretch reads IVLLILPGFAVFLLTICEFSI. At 323-329 the chain is on the cytoplasmic side; that stretch reads LEQTPVL. Residues 330–350 traverse the membrane as a helical segment; that stretch reads TVSIVGIVKELLTVIFGIIIL. At 351–355 the chain is on the extracellular side; it reads SERLS. A helical transmembrane segment spans residues 356–376; sequence GFYNWLGMLIIMADVCYYNYF. At 377-442 the chain is on the cytoplasmic side; the sequence is RYKQDLLQKY…QNVSRSSQQV (66 aa).

The protein belongs to the TPT transporter family. SLC35C subfamily.

It localises to the golgi apparatus membrane. The protein resides in the cytoplasmic vesicle. The protein localises to the COPI-coated vesicle membrane. The chain is Putative nucleotide-sugar transporter YMD8 (YMD8) from Saccharomyces cerevisiae (strain ATCC 204508 / S288c) (Baker's yeast).